The chain runs to 407 residues: Amylovoran biosynthesis glycosyltransferase AmsK (407 aa).

The protein belongs to the glycosyltransferase group 1 family. Glycosyltransferase 4 subfamily.

The protein operates within glycan metabolism; exopolysaccharide biosynthesis. Its function is as follows. Involved in the biosynthesis of amylovoran which functions as a virulence factor. This is Amylovoran biosynthesis glycosyltransferase AmsK (amsK) from Erwinia amylovora (Fire blight bacteria).